Here is a 568-residue protein sequence, read N- to C-terminus: Envelope glycoprotein E (568 aa).

The signal sequence occupies residues 1–20 (MMPATLAGLALAVTVATMFA). Residues 21 to 422 (QRVDSTTIHH…GGGPGNSKRR (402 aa)) lie on the Virion surface side of the membrane. Residues Asn88, Asn179, and Asn248 are each glycosylated (N-linked (GlcNAc...) asparagine; by host). A disulfide bond links Cys271 and Cys280. The chain crosses the membrane as a helical span at residues 423-443 (AAVLGAAVWIALTLLILGGLG). Residues 444–568 (AYVAVNKKCL…ANKTFPSQRY (125 aa)) are Intravirion-facing. The short motif at 465–468 (KPTL) is the Internalization motif element. The segment at 470–534 (THAHTYTSLP…SRRNSFGPTL (65 aa)) is disordered. The acidic stretch occupies residues 482–497 (GDLSLEQDAEDEDEDE). Residues 486-500 (LEQDAEDEDEDEEEL) show a composition bias toward acidic residues. A compositionally biased stretch (basic residues) spans 515-526 (KSSRSPSRRSSR).

Belongs to the alphaherpesvirinae glycoprotein E family. In terms of assembly, interacts with gI. Phosphorylated on serines within the acidic cluster. Phosphorylation determines whether endocytosed viral gE traffics to the trans-Golgi network or recycles to the cell membrane.

Its subcellular location is the virion membrane. It localises to the host cell membrane. The protein localises to the host cell junction. It is found in the host Golgi apparatus membrane. The protein resides in the host endosome membrane. Its function is as follows. In epithelial cells, the heterodimer gE/gI is required for the cell-to-cell spread of the virus, by sorting nascent virions to cell junctions. Once the virus reaches the cell junctions, virus particles can spread to adjacent cells extremely rapidly through interactions with cellular receptors that accumulate at these junctions. Implicated in basolateral spread in polarized cells. In neuronal cells, gE/gI is essential for the anterograde spread of the infection throughout the host nervous system. Together with US9, the heterodimer gE/gI is involved in the sorting and transport of viral structural components toward axon tips. This chain is Envelope glycoprotein E (US8), found in Psittacid herpesvirus 1 (isolate Amazon parrot/-/97-0001/1997) (PsHV-1).